We begin with the raw amino-acid sequence, 251 residues long: CDP-diacylglycerol pyrophosphatase (251 aa).

Residues 4 to 24 traverse the membrane as a helical segment; sequence AGLLFLVMIVIAVVAAGIGYW.

Belongs to the Cdh family.

It is found in the cell inner membrane. It catalyses the reaction a CDP-1,2-diacyl-sn-glycerol + H2O = a 1,2-diacyl-sn-glycero-3-phosphate + CMP + 2 H(+). It functions in the pathway phospholipid metabolism; CDP-diacylglycerol degradation; phosphatidate from CDP-diacylglycerol: step 1/1. The polypeptide is CDP-diacylglycerol pyrophosphatase (Escherichia coli (strain K12 / MC4100 / BW2952)).